Consider the following 438-residue polypeptide: Trigger factor (438 aa).

The PPIase FKBP-type domain maps to 163-248; the sequence is GDKLNIDFEG…VKRIETTEAR (86 aa).

Belongs to the FKBP-type PPIase family. Tig subfamily.

It is found in the cytoplasm. It carries out the reaction [protein]-peptidylproline (omega=180) = [protein]-peptidylproline (omega=0). Functionally, involved in protein export. Acts as a chaperone by maintaining the newly synthesized protein in an open conformation. Functions as a peptidyl-prolyl cis-trans isomerase. The protein is Trigger factor of Syntrophomonas wolfei subsp. wolfei (strain DSM 2245B / Goettingen).